A 285-amino-acid chain; its full sequence is MAAQIIDGKLIAQTVRQEVAARVKARVEAGLRAPGLAVVLVGQDPASQIYVSSKRKACEEVGFISQSFDLPANTKEIELLALINELNTNKEIDGILVQLPLPAGIDTTNILEHIDPEKDVDGFHPYNVGRLSQRIPKLRSCTPKGIITLLERYNIPVRGKHAVIVGASNIVGRPMTLEMLLAGATTTTCHRFTQDLEHHIRQADILVVAVGKPHFIPGDWIKEGATVIDVGINRLDSGKLAGDVEYDVAREKAKYITPVPGGVGPMTVATLIENTLLACEQYHSD.

Residues 166–168 (GAS) and Ile232 contribute to the NADP(+) site.

The protein belongs to the tetrahydrofolate dehydrogenase/cyclohydrolase family. In terms of assembly, homodimer.

It catalyses the reaction (6R)-5,10-methylene-5,6,7,8-tetrahydrofolate + NADP(+) = (6R)-5,10-methenyltetrahydrofolate + NADPH. The enzyme catalyses (6R)-5,10-methenyltetrahydrofolate + H2O = (6R)-10-formyltetrahydrofolate + H(+). It functions in the pathway one-carbon metabolism; tetrahydrofolate interconversion. Its function is as follows. Catalyzes the oxidation of 5,10-methylenetetrahydrofolate to 5,10-methenyltetrahydrofolate and then the hydrolysis of 5,10-methenyltetrahydrofolate to 10-formyltetrahydrofolate. The sequence is that of Bifunctional protein FolD from Photobacterium profundum (strain SS9).